Consider the following 158-residue polypeptide: Cyclic pyranopterin monophosphate synthase (158 aa).

Substrate is bound by residues 75-77 (LCH) and 113-114 (ME). D128 is a catalytic residue.

Belongs to the MoaC family. Homohexamer; trimer of dimers.

The catalysed reaction is (8S)-3',8-cyclo-7,8-dihydroguanosine 5'-triphosphate = cyclic pyranopterin phosphate + diphosphate. The protein operates within cofactor biosynthesis; molybdopterin biosynthesis. Catalyzes the conversion of (8S)-3',8-cyclo-7,8-dihydroguanosine 5'-triphosphate to cyclic pyranopterin monophosphate (cPMP). In Histophilus somni (strain 2336) (Haemophilus somnus), this protein is Cyclic pyranopterin monophosphate synthase.